A 668-amino-acid chain; its full sequence is Lebercilin-like protein (668 aa).

The tract at residues 17-44 is disordered; that stretch reads SVALENNRRSAECKRSPGTGDFSRNSSA. Over residues 22 to 31 the composition is skewed to basic and acidic residues; it reads NNRRSAECKR. Coiled-coil stretches lie at residues 148 to 259 and 305 to 336; these read LHKI…EREE and AAQT…IKNI. The tract at residues 351 to 402 is disordered; that stretch reads YPKVSSTKSVQADRKSLPFTSMRHQGTQKSDVPPLTTKGKKATGNMNHKEKS. Residues 368 to 380 show a composition bias toward polar residues; it reads PFTSMRHQGTQKS. A coiled-coil region spans residues 420-440; it reads EDSKTKYEDLSREEKHLEVQV. 3 disordered regions span residues 495–520, 533–581, and 605–668; these read RSMQ…PLRQ, LHHG…FGKS, and SGYV…KIII. Over residues 546–558 the composition is skewed to polar residues; it reads AGNTKYSHSTSKH. 2 stretches are compositionally biased toward basic and acidic residues: residues 560–572 and 621–632; these read SNRE…HSDS and GSEEPLQSKESH. Residues 633–660 show a composition bias toward polar residues; sequence PPSQASASNAFGDSKVTVVNSIKPSSPT.

This sequence belongs to the LCA5 family.

This is Lebercilin-like protein from Macaca fascicularis (Crab-eating macaque).